We begin with the raw amino-acid sequence, 518 residues long: Circadian clock oscillator protein KaiC (518 aa).

Residues 1–247 form the KaiC 1 domain; the sequence is MTNLPEHQSS…FTINNGINIF (247 aa). Positions 49, 50, 51, 52, 53, 54, and 55 each coordinate ATP. Threonine 54 is a binding site for Mg(2+). The active-site Proton acceptor in CI (KaiC 1) is the glutamate 78. Serine 90 contacts ATP. The tract at residues 116–123 is B-loop, required to bind KaiB and SasA; sequence QEVAGDFD. 5 residues coordinate ATP: lysine 225, leucine 226, arginine 227, threonine 229, and histidine 231. Positions 248-260 are linker; that stretch reads PLGAMRLTQRSSN. Positions 261–518 constitute a KaiC 2 domain; sequence VRVSSGVKTL…AKGMQDLESE (258 aa). 7 residues coordinate ATP: threonine 290, glycine 291, threonine 292, glycine 293, lysine 294, threonine 295, and leucine 296. Threonine 295 is a Mg(2+) binding site. Position 318 (glutamate 318) interacts with Mg(2+). The active-site Proton acceptor in CII (KaiC 2) is glutamate 318. An ATP-binding site is contributed by tryptophan 331. Serine 431 bears the Phosphoserine; by autocatalysis mark. Residue threonine 432 is modified to Phosphothreonine; by autocatalysis. ATP contacts are provided by arginine 451, lysine 457, methionine 458, arginine 459, serine 461, histidine 463, and lysine 465. Positions 488–497 are A-loop, interacts with KaiA; it reads GIISGTPTRI.

The protein belongs to the KaiC family. In terms of assembly, homohexamer resembling 2 stacked donuts rings with a central pore nearly blocked on one side; hexamerization is dependent on ATP-binding. Binds 2 ATP per monomer, at the subunit interface on each ring. The KaiABC complex composition changes during the circadian cycle to control KaiC phosphorylation. Complexes KaiC(6), KaiA(2-4):KaiC(6), KaiB(6):KaiC(6) and KaiC(6):KaiB(6):KaiA(12) are among the most important forms, many form cooperatively. Interacts with SasA, probably as 1 SasA trimer:1 KaiC homohexamer, has highest affinity for unphosphorylated SasA. The CI domain binds to KaiB and SasA; as they have a similar fold they compete for the same site on CI. KaiB assumes a thioredoxin-like form called KaiB(fs) when bound to KaiC. It depends on Mg(2+) as a cofactor. Post-translationally, phosphorylated on serine/threonine residues by autocatalysis. Both phosphorylated and unphosphorylated forms exist. Both autophosphorylates and autodephosphorylates. Phosphorylated form correlates with clock speed. In terms of processing, phosphorylated on serine and threonine residues by autocatalysis. Has a 4 step phosphorylation cycle; the autokinase acts first on Thr-432, then Ser-431. When Ser-431 is modified KaiC switches to an autophosphatase mode, acting first on phospho-Thr-432 then phospho-Ser-431.

The enzyme catalyses L-seryl-[protein] + ATP = O-phospho-L-seryl-[protein] + ADP + H(+). It carries out the reaction L-threonyl-[protein] + ATP = O-phospho-L-threonyl-[protein] + ADP + H(+). It catalyses the reaction ATP + H2O = ADP + phosphate + H(+). With respect to regulation, the interaction with KaiA enhances its phosphorylation status, while the interaction with KaiB decreases it. Central component of the KaiABC oscillator complex, which constitutes the main circadian regulator in cyanobacteria. Complex composition changes during the circadian cycle to control KaiC phosphorylation. KaiA stimulates KaiC autophosphorylation, while KaiB sequesters KaiA, leading to KaiC autodephosphorylation. Clock output pathways impact the RpaA transcriptional regulator. KaiC enhances the autophosphorylation activity of SasA, which then transfers its phosphate group to RpaA to activate it. KaiB and KaiC together enhance the phospho-RpaA dephosphatase activity of CikA. In terms of biological role, stimulates SasA autophosphorylation. Fully phosphorylated KaiC (tested with phosphomimetic Asp-431-432-Asp) is the best stimulant, requires the ATPase activity of the CII domain. Unphosphorylated SasA associates with KaiC and its autophosphorylation activity is enhanced. Phospho-SasA is released and associates with RpaA, transferring its phosphate group. Formation of the KaiA:KaiB complex is promoted by KaiC, helping switch KaiC from its autophosphorylation to autodephosphatase function. Functionally, has a weak, temperature-independent ATPase activity (about 14 molecules of ATP per day) that defines the circadian period. ATPase activity is mostly contributed by the CI domain; the CII domain augments the activity. The addition of KaiA increases activity. ATPase is inhibited during the KaiC phosphorylating phase and activated during the KaiC dephosphorylating phase. The polypeptide is Circadian clock oscillator protein KaiC (Thermosynechococcus vestitus (strain NIES-2133 / IAM M-273 / BP-1)).